A 224-amino-acid polypeptide reads, in one-letter code: MESKKEGVASAPTSPESRRTRSNGKGKTIAEATPPSVTVVSTKVTPSPRGGWRKGAAILDFILRLGAISSAIGAAAVMGNNEQILPFFTQFFQFHVQWDDFPMFQFFVFANGAAVVFLILSLPFSIVCIVRPFAVGPRLLLVIVDIFAMALVIAAASAAAAVVYLAHNGSQDANWIAICQQYTDFCQVTSQAVVASFVAAVFLICLIVLSSVALKKGLKREFGW.

Positions 1-30 are disordered; that stretch reads MESKKEGVASAPTSPESRRTRSNGKGKTIA. Topologically, residues 1-57 are cytoplasmic; sequence MESKKEGVASAPTSPESRRTRSNGKGKTIAEATPPSVTVVSTKVTPSPRGGWRKGAA. The helical transmembrane segment at 58–78 threads the bilayer; it reads ILDFILRLGAISSAIGAAAVM. The Extracellular segment spans residues 79-105; it reads GNNEQILPFFTQFFQFHVQWDDFPMFQ. Residues 106-126 traverse the membrane as a helical segment; the sequence is FFVFANGAAVVFLILSLPFSI. Over 127–138 the chain is Cytoplasmic; the sequence is VCIVRPFAVGPR. The chain crosses the membrane as a helical span at residues 139 to 159; the sequence is LLLVIVDIFAMALVIAAASAA. Residues 160–191 are Extracellular-facing; it reads AAVVYLAHNGSQDANWIAICQQYTDFCQVTSQ. N-linked (GlcNAc...) asparagine glycosylation occurs at N168. A helical membrane pass occupies residues 192-212; that stretch reads AVVASFVAAVFLICLIVLSSV. The Cytoplasmic portion of the chain corresponds to 213–224; it reads ALKKGLKREFGW.

The protein belongs to the Casparian strip membrane proteins (CASP) family. As to quaternary structure, homodimer and heterodimers.

The protein localises to the cell membrane. Functionally, regulates membrane-cell wall junctions and localized cell wall deposition. Required for establishment of the Casparian strip membrane domain (CSD) and the subsequent formation of Casparian strips, a cell wall modification of the root endodermis that determines an apoplastic barrier between the intraorganismal apoplasm and the extraorganismal apoplasm and prevents lateral diffusion. This Vigna unguiculata (Cowpea) protein is Casparian strip membrane protein 3.